Here is a 303-residue protein sequence, read N- to C-terminus: MESPHLSVLKNEVLEIFAPLSEGYFIDCTLGFGGHSEAILKAHPKLSLIGIDQDPHALEFSQKRLAPFKDRFSFREGRFSEVLPTLKELPIAGILADIGVSSLQLDDSSRGFSFHSERLDMRMNPNAQLSALEVVNSYPQDRLERIFKEYGEIKESKKLVSLISEERKKGRITSAEALSRLIERHFKRVGNIHPATLAFQAIRIEVNDELGEIGRALQTIGEIAKGRVSIISFHSLEDRLVKNFFKEWSNSCLCPPEAFRCTCGNNHEKGQILTKKPLVATPEESKANPRSRSAKMRAFEFKS.

S-adenosyl-L-methionine contacts are provided by residues 33–35 (GGH), Asp-52, Phe-79, Asp-97, and Gln-104.

This sequence belongs to the methyltransferase superfamily. RsmH family.

It localises to the cytoplasm. The catalysed reaction is cytidine(1402) in 16S rRNA + S-adenosyl-L-methionine = N(4)-methylcytidine(1402) in 16S rRNA + S-adenosyl-L-homocysteine + H(+). Its function is as follows. Specifically methylates the N4 position of cytidine in position 1402 (C1402) of 16S rRNA. In Wolinella succinogenes (strain ATCC 29543 / DSM 1740 / CCUG 13145 / JCM 31913 / LMG 7466 / NCTC 11488 / FDC 602W) (Vibrio succinogenes), this protein is Ribosomal RNA small subunit methyltransferase H.